Consider the following 782-residue polypeptide: Acetazolamide conferring resistance protein zam (782 aa).

In terms of domain architecture, RNB spans 270–579 (EVALSLESQA…QRLLKLVLTE (310 aa)). The S1 motif domain occupies 655–736 (GEIFRGLITG…YRQQIDLGAV (82 aa)). The tract at residues 737-782 (NNAPKDSANMDFDDDDEDGDEREEQDTMDWDAMEDGDDDEGGAVIF) is disordered. Over residues 747-782 (DFDDDDEDGDEREEQDTMDWDAMEDGDDDEGGAVIF) the composition is skewed to acidic residues.

This sequence belongs to the RNR ribonuclease family.

Its function is as follows. Not known; control resistance to the carbonic anhydrase inhibitor acetazolamide. This is Acetazolamide conferring resistance protein zam (zam) from Synechocystis sp. (strain ATCC 27184 / PCC 6803 / Kazusa).